The sequence spans 306 residues: Plant-type L-asparaginase (306 aa).

T176 (nucleophile) is an active-site residue. Substrate-binding positions include 203–206 and 225–228; these read RVGD and TGLG.

This sequence belongs to the Ntn-hydrolase family. As to quaternary structure, heterotetramer of two alpha and two beta chains arranged as a dimer of alpha/beta heterodimers. Autocleaved. Generates the alpha and beta subunits. The N-terminal residue of the beta subunit is thought to be responsible for the nucleophile hydrolase activity.

The enzyme catalyses L-asparagine + H2O = L-aspartate + NH4(+). Catalyzes the hydrolysis of L-asparagine into L-aspartate and ammonia. The sequence is that of Plant-type L-asparaginase from Pyrococcus furiosus (strain ATCC 43587 / DSM 3638 / JCM 8422 / Vc1).